Consider the following 348-residue polypeptide: Protein pelota homolog (348 aa).

The protein belongs to the eukaryotic release factor 1 family. Pelota subfamily. As to quaternary structure, monomer. A divalent metal cation serves as cofactor.

It localises to the cytoplasm. Functionally, may function in recognizing stalled ribosomes, interact with stem-loop structures in stalled mRNA molecules, and effect endonucleolytic cleavage of the mRNA. May play a role in the release non-functional ribosomes and degradation of damaged mRNAs. Has endoribonuclease activity. The chain is Protein pelota homolog from Methanococcus maripaludis (strain C5 / ATCC BAA-1333).